Reading from the N-terminus, the 178-residue chain is Ribosomal RNA small subunit methyltransferase G (178 aa).

S-adenosyl-L-methionine is bound by residues glycine 54, leucine 59, 105–106 (LE), and arginine 120.

The protein belongs to the methyltransferase superfamily. RNA methyltransferase RsmG family.

Its subcellular location is the cytoplasm. It carries out the reaction guanosine(527) in 16S rRNA + S-adenosyl-L-methionine = N(7)-methylguanosine(527) in 16S rRNA + S-adenosyl-L-homocysteine. Specifically methylates the N7 position of guanine in position 527 of 16S rRNA. The chain is Ribosomal RNA small subunit methyltransferase G from Helicobacter pylori (strain HPAG1).